The chain runs to 382 residues: UDP-N-acetylglucosamine--N-acetylmuramyl-(pentapeptide) pyrophosphoryl-undecaprenol N-acetylglucosamine transferase (382 aa).

Residues 11 to 13 (TGG), N124, R165, S200, I254, and Q299 contribute to the UDP-N-acetyl-alpha-D-glucosamine site.

Belongs to the glycosyltransferase 28 family. MurG subfamily.

It is found in the cell inner membrane. The enzyme catalyses di-trans,octa-cis-undecaprenyl diphospho-N-acetyl-alpha-D-muramoyl-L-alanyl-D-glutamyl-meso-2,6-diaminopimeloyl-D-alanyl-D-alanine + UDP-N-acetyl-alpha-D-glucosamine = di-trans,octa-cis-undecaprenyl diphospho-[N-acetyl-alpha-D-glucosaminyl-(1-&gt;4)]-N-acetyl-alpha-D-muramoyl-L-alanyl-D-glutamyl-meso-2,6-diaminopimeloyl-D-alanyl-D-alanine + UDP + H(+). It functions in the pathway cell wall biogenesis; peptidoglycan biosynthesis. Its function is as follows. Cell wall formation. Catalyzes the transfer of a GlcNAc subunit on undecaprenyl-pyrophosphoryl-MurNAc-pentapeptide (lipid intermediate I) to form undecaprenyl-pyrophosphoryl-MurNAc-(pentapeptide)GlcNAc (lipid intermediate II). This is UDP-N-acetylglucosamine--N-acetylmuramyl-(pentapeptide) pyrophosphoryl-undecaprenol N-acetylglucosamine transferase from Nitratidesulfovibrio vulgaris (strain DSM 19637 / Miyazaki F) (Desulfovibrio vulgaris).